A 495-amino-acid polypeptide reads, in one-letter code: Cobyric acid synthase (495 aa).

The GATase cobBQ-type domain occupies 262–445 (CLEIAVIRLP…LHGLFDNHRW (184 aa)). Residue cysteine 340 is the Nucleophile of the active site. Residue histidine 437 is part of the active site.

This sequence belongs to the CobB/CobQ family. CobQ subfamily.

Its pathway is cofactor biosynthesis; adenosylcobalamin biosynthesis. Its function is as follows. Catalyzes amidations at positions B, D, E, and G on adenosylcobyrinic A,C-diamide. NH(2) groups are provided by glutamine, and one molecule of ATP is hydrogenolyzed for each amidation. This Synechococcus sp. (strain JA-3-3Ab) (Cyanobacteria bacterium Yellowstone A-Prime) protein is Cobyric acid synthase.